Here is a 216-residue protein sequence, read N- to C-terminus: uncharacterized protein (216 aa).

It localises to the plastid. It is found in the chloroplast. This is an uncharacterized protein from Pyropia yezoensis (Susabi-nori).